The sequence spans 701 residues: Elongation factor G (701 aa).

In terms of domain architecture, tr-type G spans 11 to 287; that stretch reads TKVRNIGIMA…AVIDYLPSPL (277 aa). GTP contacts are provided by residues 20-27, 84-88, and 138-141; these read AHIDAGKT, DTPGH, and NKMD.

It belongs to the TRAFAC class translation factor GTPase superfamily. Classic translation factor GTPase family. EF-G/EF-2 subfamily.

It localises to the cytoplasm. In terms of biological role, catalyzes the GTP-dependent ribosomal translocation step during translation elongation. During this step, the ribosome changes from the pre-translocational (PRE) to the post-translocational (POST) state as the newly formed A-site-bound peptidyl-tRNA and P-site-bound deacylated tRNA move to the P and E sites, respectively. Catalyzes the coordinated movement of the two tRNA molecules, the mRNA and conformational changes in the ribosome. This is Elongation factor G from Mycobacterium marinum (strain ATCC BAA-535 / M).